We begin with the raw amino-acid sequence, 88 residues long: Potassium channel toxin MeuTXKbeta3-meucin-24 (88 aa).

Residues 1–22 (MMKQQFFLFLAVIVMISSVIEA) form the signal peptide. Positions 55–88 (EYACPVIEKWCEDHCQAKNAIGRCENTECKCLSK) constitute a BetaSPN-type CS-alpha/beta domain. 3 disulfides stabilise this stretch: Cys-58–Cys-78, Cys-65–Cys-83, and Cys-69–Cys-85.

The protein belongs to the long chain scorpion toxin family. Class 2 subfamily. In terms of tissue distribution, expressed by the venom gland.

The protein resides in the secreted. Functionally, inhibits voltage-gated potassium channels. Its function is as follows. The synthetic meucin-24 inhibits the development of P.berghei ookinetes, kills intraerythrocytic P.falciparum, and is cytotoxic to the Drosophila S2 cells at micromolar concentrations. No antibacterial, antifungal and hemolytic activities have been found at micromolar concentrations. This chain is Potassium channel toxin MeuTXKbeta3-meucin-24, found in Mesobuthus eupeus (Lesser Asian scorpion).